The sequence spans 223 residues: UPF0758 protein Tgr7_0100 (223 aa).

The 122-residue stretch at 102–223 folds into the MPN domain; the sequence is ALTSPDDTRR…LVSFAERGLL (122 aa). Residues His173, His175, and Asp186 each coordinate Zn(2+). A JAMM motif motif is present at residues 173–186; the sequence is HNHPSGVAEPSRSD.

The protein belongs to the UPF0758 family.

In Thioalkalivibrio sulfidiphilus (strain HL-EbGR7), this protein is UPF0758 protein Tgr7_0100.